Reading from the N-terminus, the 362-residue chain is Probable RNA methyltransferase Tbd_1951 (362 aa).

Glutamate 89 serves as the catalytic Proton acceptor. Positions 92-318 (LLPRDGVCVS…AKLRHSAGQD (227 aa)) constitute a Radical SAM core domain. Residues cysteine 99 and cysteine 323 are joined by a disulfide bond. Residues cysteine 106, cysteine 110, and cysteine 113 each coordinate [4Fe-4S] cluster. S-adenosyl-L-methionine contacts are provided by residues 151-152 (GE), serine 181, 204-206 (SLH), and asparagine 280. Cysteine 323 (S-methylcysteine intermediate) is an active-site residue. Residues 342-362 (LPSAETPAASPKAAASIGFPG) are disordered. Low complexity predominate over residues 343–362 (PSAETPAASPKAAASIGFPG).

It belongs to the radical SAM superfamily. RlmN family. It depends on [4Fe-4S] cluster as a cofactor.

It is found in the cytoplasm. The sequence is that of Probable RNA methyltransferase Tbd_1951 from Thiobacillus denitrificans (strain ATCC 25259 / T1).